A 411-amino-acid polypeptide reads, in one-letter code: DNA polymerase IV (411 aa).

The 194-residue stretch at 18–211 folds into the UmuC domain; sequence VVHVDMDCFY…LDVADLHGVG (194 aa). D22 and D130 together coordinate Mg(2+). Residue E131 is part of the active site. Disordered regions lie at residues 248-280 and 376-411; these read FHRR…GATE and GFSG…DEFT. Positions 253-274 are enriched in basic and acidic residues; the sequence is RGADSRPVEPRGKPKSLSRESS. Residues 384–402 show a composition bias toward gly residues; the sequence is DGGGHEGGACGGAGRGSCG.

The protein belongs to the DNA polymerase type-Y family. In terms of assembly, monomer. Requires Mg(2+) as cofactor.

Its subcellular location is the cytoplasm. The enzyme catalyses DNA(n) + a 2'-deoxyribonucleoside 5'-triphosphate = DNA(n+1) + diphosphate. Poorly processive, error-prone DNA polymerase involved in untargeted mutagenesis. Copies undamaged DNA at stalled replication forks, which arise in vivo from mismatched or misaligned primer ends. These misaligned primers can be extended by PolIV. Exhibits no 3'-5' exonuclease (proofreading) activity. May be involved in translesional synthesis. The protein is DNA polymerase IV of Halobacterium salinarum (strain ATCC 29341 / DSM 671 / R1).